We begin with the raw amino-acid sequence, 193 residues long: Ribosomal RNA small subunit methyltransferase G (193 aa).

S-adenosyl-L-methionine is bound by residues Gly64, Leu69, 113–114 (IE), and Arg126.

Belongs to the methyltransferase superfamily. RNA methyltransferase RsmG family.

Its subcellular location is the cytoplasm. The catalysed reaction is guanosine(527) in 16S rRNA + S-adenosyl-L-methionine = N(7)-methylguanosine(527) in 16S rRNA + S-adenosyl-L-homocysteine. In terms of biological role, specifically methylates the N7 position of guanine in position 527 of 16S rRNA. The protein is Ribosomal RNA small subunit methyltransferase G of Rickettsia massiliae (strain Mtu5).